Here is a 618-residue protein sequence, read N- to C-terminus: Glucose starvation modulator protein 1 (618 aa).

The zn(2)-C6 fungal-type DNA-binding region spans Cys20–Cys48. The interval Ala325–Lys353 is disordered. Residues Ala335–Lys353 show a composition bias toward basic and acidic residues. Positions Leu466 to Gly538 constitute a PAS domain.

This sequence belongs to the ERT1/acuK family.

It is found in the nucleus. Its function is as follows. Transcription factor which regulates nonfermentable carbon utilization. Binds specifically to 5'-CGGN(8)CGG-3' and 5'-CGGN(9)CGG-3' sequences in the promoter region. This chain is Glucose starvation modulator protein 1 (GSM1), found in Saccharomyces cerevisiae (strain JAY291) (Baker's yeast).